Reading from the N-terminus, the 486-residue chain is UDP-N-acetylmuramate--L-alanine ligase (486 aa).

129-135 contributes to the ATP binding site; sequence GTHGKTT.

It belongs to the MurCDEF family.

The protein localises to the cytoplasm. The catalysed reaction is UDP-N-acetyl-alpha-D-muramate + L-alanine + ATP = UDP-N-acetyl-alpha-D-muramoyl-L-alanine + ADP + phosphate + H(+). It functions in the pathway cell wall biogenesis; peptidoglycan biosynthesis. Its function is as follows. Cell wall formation. The sequence is that of UDP-N-acetylmuramate--L-alanine ligase from Vibrio atlanticus (strain LGP32) (Vibrio splendidus (strain Mel32)).